Consider the following 126-residue polypeptide: Phosphoribosyl-AMP cyclohydrolase (126 aa).

Asp76 serves as a coordination point for Mg(2+). Cys77 lines the Zn(2+) pocket. The Mg(2+) site is built by Asp78 and Asp80. 2 residues coordinate Zn(2+): Cys94 and Cys101.

Belongs to the PRA-CH family. Homodimer. The cofactor is Mg(2+). Requires Zn(2+) as cofactor.

It is found in the cytoplasm. The enzyme catalyses 1-(5-phospho-beta-D-ribosyl)-5'-AMP + H2O = 1-(5-phospho-beta-D-ribosyl)-5-[(5-phospho-beta-D-ribosylamino)methylideneamino]imidazole-4-carboxamide. It participates in amino-acid biosynthesis; L-histidine biosynthesis; L-histidine from 5-phospho-alpha-D-ribose 1-diphosphate: step 3/9. Functionally, catalyzes the hydrolysis of the adenine ring of phosphoribosyl-AMP. This Ruthia magnifica subsp. Calyptogena magnifica protein is Phosphoribosyl-AMP cyclohydrolase.